The primary structure comprises 269 residues: Cytochrome c oxidase subunit 3 (269 aa).

7 helical membrane passes run 24–44 (FYNS…MHGF), 46–66 (NMYI…TLWF), 90–110 (GVGL…WTFF), 132–152 (IDPF…GVTV), 167–187 (ALYG…FQGI), 207–227 (FSTG…SVGL), and 247–267 (ILYW…IYFW).

It belongs to the cytochrome c oxidase subunit 3 family. As to quaternary structure, component of the cytochrome c oxidase (complex IV, CIV), a multisubunit enzyme composed of a catalytic core of 3 subunits and several supernumerary subunits. The complex exists as a monomer or a dimer and forms supercomplexes (SCs) in the inner mitochondrial membrane with ubiquinol-cytochrome c oxidoreductase (cytochrome b-c1 complex, complex III, CIII).

Its subcellular location is the mitochondrion inner membrane. It carries out the reaction 4 Fe(II)-[cytochrome c] + O2 + 8 H(+)(in) = 4 Fe(III)-[cytochrome c] + 2 H2O + 4 H(+)(out). Component of the cytochrome c oxidase, the last enzyme in the mitochondrial electron transport chain which drives oxidative phosphorylation. The respiratory chain contains 3 multisubunit complexes succinate dehydrogenase (complex II, CII), ubiquinol-cytochrome c oxidoreductase (cytochrome b-c1 complex, complex III, CIII) and cytochrome c oxidase (complex IV, CIV), that cooperate to transfer electrons derived from NADH and succinate to molecular oxygen, creating an electrochemical gradient over the inner membrane that drives transmembrane transport and the ATP synthase. Cytochrome c oxidase is the component of the respiratory chain that catalyzes the reduction of oxygen to water. Electrons originating from reduced cytochrome c in the intermembrane space (IMS) are transferred via the dinuclear copper A center (CU(A)) of subunit 2 and heme A of subunit 1 to the active site in subunit 1, a binuclear center (BNC) formed by heme A3 and copper B (CU(B)). The BNC reduces molecular oxygen to 2 water molecules using 4 electrons from cytochrome c in the IMS and 4 protons from the mitochondrial matrix. This chain is Cytochrome c oxidase subunit 3 (COXIII), found in Trichophyton rubrum (Athlete's foot fungus).